The sequence spans 105 residues: Small ribosomal subunit protein uS10c (105 aa).

The protein belongs to the universal ribosomal protein uS10 family. As to quaternary structure, part of the 30S ribosomal subunit.

Its subcellular location is the plastid. The protein localises to the chloroplast. In terms of biological role, involved in the binding of tRNA to the ribosomes. This chain is Small ribosomal subunit protein uS10c, found in Pyropia yezoensis (Susabi-nori).